Here is an 88-residue protein sequence, read N- to C-terminus: Phosphocarrier protein HPr (88 aa).

The HPr domain maps to 1–88; sequence MEKRDFHVVA…ETMKKEGLSE (88 aa). Residue His-15 is the Pros-phosphohistidine intermediate of the active site. Residue Ser-46 is modified to Phosphoserine; by HPrK/P.

Belongs to the HPr family.

It is found in the cytoplasm. Its activity is regulated as follows. Phosphorylation on Ser-46 inhibits the phosphoryl transfer from enzyme I to HPr. General (non sugar-specific) component of the phosphoenolpyruvate-dependent sugar phosphotransferase system (sugar PTS). This major carbohydrate active-transport system catalyzes the phosphorylation of incoming sugar substrates concomitantly with their translocation across the cell membrane. The phosphoryl group from phosphoenolpyruvate (PEP) is transferred to the phosphoryl carrier protein HPr by enzyme I. Phospho-HPr then transfers it to the PTS EIIA domain. Its function is as follows. P-Ser-HPr interacts with the catabolite control protein A (CcpA), forming a complex that binds to DNA at the catabolite response elements cre, operator sites preceding a large number of catabolite-regulated genes. Thus, P-Ser-HPr is a corepressor in carbon catabolite repression (CCR), a mechanism that allows bacteria to coordinate and optimize the utilization of available carbon sources. P-Ser-HPr also plays a role in inducer exclusion, in which it probably interacts with several non-PTS permeases and inhibits their transport activity. The polypeptide is Phosphocarrier protein HPr (ptsH) (Latilactobacillus sakei (Lactobacillus sakei)).